Reading from the N-terminus, the 353-residue chain is Ribosome biogenesis protein BRX1 homolog (353 aa).

Positions 1-50 (MAATKRKRRGGLEVQAKKPKRSSKDAGQPAKQADVAKEAEEENRDRIPGP) are disordered. The segment covering 34–47 (DVAKEAEEENRDRI) has biased composition (basic and acidic residues). One can recognise a Brix domain in the interval 60–249 (ERILIFSSRG…LIKIFQGSFG (190 aa)). A Glycyl lysine isopeptide (Lys-Gly) (interchain with G-Cter in SUMO2) cross-link involves residue Lys-160. A Phosphoserine modification is found at Ser-261. The residue at position 276 (Lys-276) is an N6-acetyllysine. Residues Lys-314 and Lys-322 each participate in a glycyl lysine isopeptide (Lys-Gly) (interchain with G-Cter in SUMO2) cross-link. The segment covering 334-344 (RRIYKRHRKLQ) has biased composition (basic residues). Residues 334–353 (RRIYKRHRKLQQKMSRGSAK) are disordered.

Belongs to the BRX1 family.

Its subcellular location is the nucleus. It is found in the nucleolus. Its function is as follows. Required for biogenesis of the 60S ribosomal subunit. This is Ribosome biogenesis protein BRX1 homolog (Brix1) from Mus musculus (Mouse).